A 110-amino-acid polypeptide reads, in one-letter code: Protein YcgL (110 aa).

A YcgL domain is found at 14 to 98 (MFCVIYRSSK…PPEDLLKQHL (85 aa)). The interval 88–110 (PPPEDLLKQHLSSVGQNTSPADR) is disordered. Polar residues predominate over residues 97-110 (HLSSVGQNTSPADR).

This is Protein YcgL from Salmonella paratyphi A (strain ATCC 9150 / SARB42).